Reading from the N-terminus, the 284-residue chain is MSQTPEARARDNQTRQIQESVNNVEKHFGELCQIFAGYVRKTARLRDKADLLVREVNTYADTETPTVKLGLKNFADELAKLQDYRQAEVERLESRVVEPLKSYGSIIKLKREDLKVTLTARNREAKQMAQLEKTRQRNPSDRQIISQAETELQRATMDASRISQQLEETIDNFEKQKMKDIKKLFTEFVSIEMVFHGKALEVLTAAYQHIQDIDEEEDLEVFRNSLHPPDFQSRLDIVRANSRTGSTSRGPSVISQPPGNRQKNRIEDEDEEEEDDENSTEDEN.

A mitochondrion-targeting transit peptide spans 1 to 48 (MSQTPEARARDNQTRQIQESVNNVEKHFGELCQIFAGYVRKTARLRDK). Positions 11-221 (DNQTRQIQES…DIDEEEDLEV (211 aa)) are BAR-like. 2 coiled-coil regions span residues 142–184 (RQII…IKKL) and 260–284 (NRQK…EDEN). A compositionally biased stretch (polar residues) spans 242–261 (SRTGSTSRGPSVISQPPGNR). Residues 242–284 (SRTGSTSRGPSVISQPPGNRQKNRIEDEDEEEEDDENSTEDEN) form a disordered region. The segment covering 267-284 (EDEDEEEEDDENSTEDEN) has biased composition (acidic residues).

It belongs to the CIBAR family.

The protein localises to the cytoplasm. It localises to the cytoskeleton. The protein resides in the microtubule organizing center. It is found in the centrosome. Its subcellular location is the centriole. The protein localises to the nucleus. It localises to the mitochondrion inner membrane. The protein resides in the cell projection. It is found in the cilium. Its subcellular location is the flagellum. In terms of biological role, plays a critical role in regulating mitochondrial ultrastructure and function by maintaining the integrity of mitochondrial morphology, particularly the organization of cristae. Plays a crucial role in ciliogenesis. Plays a key role in the correct positioning of the annulus, a septin-based ring structure in the sperm flagellum, serving both as a physical barrier and a membrane diffusion barrier that separates the midpiece (MP) from the principal piece (PP). In Xenopus laevis (African clawed frog), this protein is CBY1-interacting BAR domain-containing protein 1-A.